We begin with the raw amino-acid sequence, 151 residues long: Transcriptional regulator MraZ (151 aa).

2 SpoVT-AbrB domains span residues Ala5 to Glu52 and Ala81 to Ala124.

This sequence belongs to the MraZ family. In terms of assembly, forms oligomers.

Its subcellular location is the cytoplasm. The protein resides in the nucleoid. This chain is Transcriptional regulator MraZ, found in Pseudomonas aeruginosa (strain LESB58).